The following is a 672-amino-acid chain: Spermatid perinuclear RNA-binding protein (672 aa).

A DZF domain is found at 5-362 (RSFANDDRHV…ALKRPFEDGV (358 aa)). The interval 348-370 (GTGSSALKRPFEDGVGDDKDPNK) is disordered. Over residues 356-370 (RPFEDGVGDDKDPNK) the composition is skewed to basic and acidic residues. Positions 386-452 (DLMNALMRLN…AVKVLQAMGY (67 aa)) constitute a DRBM 1 domain. The segment at 463–494 (VSSDEKSDNEGKNETVSSISSNNTGNSTADTS) is disordered. The segment covering 465-475 (SDEKSDNEGKN) has biased composition (basic and acidic residues). The segment covering 477 to 490 (TVSSISSNNTGNST) has biased composition (low complexity). Positions 509–575 (SGKNPVMELN…ALAALEKLFS (67 aa)) constitute a DRBM 2 domain.

The protein resides in the cytoplasm. Functionally, may be involved in normal spermatogenesis and sperm function. Binds to double-stranded DNA and RNA. The sequence is that of Spermatid perinuclear RNA-binding protein (STRBP) from Gallus gallus (Chicken).